The following is a 278-amino-acid chain: Urease accessory protein UreD (278 aa).

Belongs to the UreD family. UreD, UreF and UreG form a complex that acts as a GTP-hydrolysis-dependent molecular chaperone, activating the urease apoprotein by helping to assemble the nickel containing metallocenter of UreC. The UreE protein probably delivers the nickel.

Its subcellular location is the cytoplasm. Required for maturation of urease via the functional incorporation of the urease nickel metallocenter. This is Urease accessory protein UreD from Staphylococcus epidermidis (strain ATCC 12228 / FDA PCI 1200).